Here is a 230-residue protein sequence, read N- to C-terminus: Ribose-5-phosphate isomerase A (230 aa).

Residues 29 to 32 (TGST), 85 to 88 (DGAD), and 99 to 102 (KGAG) each bind substrate. Glutamate 108 serves as the catalytic Proton acceptor. Lysine 126 contacts substrate.

Belongs to the ribose 5-phosphate isomerase family. Homodimer.

It carries out the reaction aldehydo-D-ribose 5-phosphate = D-ribulose 5-phosphate. It functions in the pathway carbohydrate degradation; pentose phosphate pathway; D-ribose 5-phosphate from D-ribulose 5-phosphate (non-oxidative stage): step 1/1. Its function is as follows. Catalyzes the reversible conversion of ribose-5-phosphate to ribulose 5-phosphate. This Synechococcus sp. (strain JA-3-3Ab) (Cyanobacteria bacterium Yellowstone A-Prime) protein is Ribose-5-phosphate isomerase A.